Reading from the N-terminus, the 312-residue chain is MMSNLCNRISKKELKKKILMNEESRIVVSFYKYFLIKNTKEYRDRIYQNFYKYNVLGRVYVSDEGINAQISIPVKFYFFVKNFLYNSDLELNNLFINKSLSNHKKAFWVLSVKIKKKIVNDGITNPLFNFKKVGIYIKSRQVNMMLSDRNVIFIDMRNSYEYEIGHFPNAIEIKSQTFREQLKKVIQIMHYAKNKKIVMYCTGGIRCEKASAWMHFNGFKYVYHLKNGILGYVHDANKNGLPILFQGSNFVFDNRMSEKISDKIISFCKQCDKPSDRYVNCNFNLCHLLFIQCKDCTIKFKKCCSKYCMQHL.

In terms of domain architecture, Rhodanese spans 147–237 (SDRNVIFIDM…GILGYVHDAN (91 aa)). Cys-201 functions as the Cysteine persulfide intermediate in the catalytic mechanism.

It belongs to the TrhO family.

The enzyme catalyses uridine(34) in tRNA + AH2 + O2 = 5-hydroxyuridine(34) in tRNA + A + H2O. Catalyzes oxygen-dependent 5-hydroxyuridine (ho5U) modification at position 34 in tRNAs. This chain is tRNA uridine(34) hydroxylase, found in Buchnera aphidicola subsp. Schizaphis graminum (strain Sg).